We begin with the raw amino-acid sequence, 508 residues long: Photosystem II CP47 reaction center protein (508 aa).

The next 6 helical transmembrane spans lie at 21–36 (SVHLMHTALVSGWAGS), 101–115 (IVLSGLLFLASIWHW), 140–156 (GIHLFLSGLLCFGFGAF), 203–218 (IAAGILGILAGLFHLT), 237–252 (VLSSSIAAVFWAAFVV), and 457–472 (CFALLFFFGHIWHGAR).

It belongs to the PsbB/PsbC family. PsbB subfamily. As to quaternary structure, PSII is composed of 1 copy each of membrane proteins PsbA, PsbB, PsbC, PsbD, PsbE, PsbF, PsbH, PsbI, PsbJ, PsbK, PsbL, PsbM, PsbT, PsbX, PsbY, PsbZ, Psb30/Ycf12, at least 3 peripheral proteins of the oxygen-evolving complex and a large number of cofactors. It forms dimeric complexes. Requires Binds multiple chlorophylls. PSII binds additional chlorophylls, carotenoids and specific lipids. as cofactor.

It localises to the plastid. The protein resides in the chloroplast thylakoid membrane. Functionally, one of the components of the core complex of photosystem II (PSII). It binds chlorophyll and helps catalyze the primary light-induced photochemical processes of PSII. PSII is a light-driven water:plastoquinone oxidoreductase, using light energy to abstract electrons from H(2)O, generating O(2) and a proton gradient subsequently used for ATP formation. The polypeptide is Photosystem II CP47 reaction center protein (Chlorokybus atmophyticus (Soil alga)).